Consider the following 71-residue polypeptide: MKKDIHPNYSAVTATCTCGNTLQLNSTLGSDLHVDVCSNCHPFYTGQQKMVDTGGRVDRFNKRFGARRTTK.

Cysteine 16, cysteine 18, cysteine 37, and cysteine 40 together coordinate Zn(2+).

Belongs to the bacterial ribosomal protein bL31 family. Type A subfamily. In terms of assembly, part of the 50S ribosomal subunit. Zn(2+) is required as a cofactor.

Functionally, binds the 23S rRNA. The protein is Large ribosomal subunit protein bL31 of Marinomonas sp. (strain MWYL1).